We begin with the raw amino-acid sequence, 259 residues long: Dihydroorotate dehydrogenase B (NAD(+)), electron transfer subunit (259 aa).

Residues 1–101 (MKIEDCTVEE…MGPLGRGYDV (101 aa)) form the FAD-binding FR-type domain. FAD is bound by residues 52 to 55 (RPIS), 69 to 71 (IYR), and 76 to 77 (GT). Residues Cys-223, Cys-228, Cys-231, and Cys-245 each contribute to the [2Fe-2S] cluster site.

The protein belongs to the PyrK family. In terms of assembly, heterotetramer of 2 PyrK and 2 PyrD type B subunits. [2Fe-2S] cluster is required as a cofactor. The cofactor is FAD.

It functions in the pathway pyrimidine metabolism; UMP biosynthesis via de novo pathway; orotate from (S)-dihydroorotate (NAD(+) route): step 1/1. Responsible for channeling the electrons from the oxidation of dihydroorotate from the FMN redox center in the PyrD type B subunit to the ultimate electron acceptor NAD(+). The chain is Dihydroorotate dehydrogenase B (NAD(+)), electron transfer subunit from Fusobacterium nucleatum subsp. nucleatum (strain ATCC 25586 / DSM 15643 / BCRC 10681 / CIP 101130 / JCM 8532 / KCTC 2640 / LMG 13131 / VPI 4355).